Consider the following 94-residue polypeptide: Progonadoliberin-3 (94 aa).

Positions 1-23 (MEGKGRVLVQLLMLACVLEVSLC) are cleaved as a signal peptide. Gln24 carries the pyrrolidone carboxylic acid modification. Gly33 carries the glycine amide modification.

The protein belongs to the GnRH family.

The protein resides in the secreted. Its function is as follows. Stimulates the secretion of gonadotropins. This chain is Progonadoliberin-3 (gnrh3), found in Carassius auratus (Goldfish).